A 242-amino-acid polypeptide reads, in one-letter code: NLP effector protein 8 (242 aa).

The signal sequence occupies residues 1–17; the sequence is MHLTVFYLVALCTFASA. The Conserved undecapeptide motif signature appears at 108-118; the sequence is AIMYAWYFPRD. The short motif at 127–133 is the Conserved heptapeptide motif element; that stretch reads GHRNAWE. Residue Asn-206 is glycosylated (N-linked (GlcNAc...) asparagine).

This sequence belongs to the Necrosis inducing protein (NPP1) family.

It localises to the secreted. Functionally, probable secreted effector that may act as a pathogen-associated molecular pattern (PAMP) recognized by the plant immune system. The protein is NLP effector protein 8 of Plasmopara viticola (Downy mildew of grapevine).